A 483-amino-acid chain; its full sequence is UDP-glucosyl transferase 73B2 (483 aa).

The active-site Proton acceptor is histidine 22. Residue histidine 22 participates in an anthocyanidin binding. Aspartate 133 functions as the Charge relay in the catalytic mechanism. Residues alanine 355, glutamine 357, histidine 372, tryptophan 375, asparagine 376, serine 377, and glutamate 380 each coordinate UDP-alpha-D-glucose. Residue alanine 395 participates in an anthocyanidin binding. The UDP-alpha-D-glucose site is built by glutamate 396 and glutamine 397.

Belongs to the UDP-glycosyltransferase family. As to expression, expressed in roots and flowers.

The catalysed reaction is a 7-O-hydroxy-flavonol + UDP-alpha-D-glucose = a flavonol 7-O-beta-D-glucoside + UDP + H(+). It functions in the pathway secondary metabolite biosynthesis; flavonoid biosynthesis. Catalyzes the glycosylation of flavonoids from UDP-glucose. Uses a wide range of flavonoid substrates including flavonols (quercetin, kaempferol, isorhamnetin, 3-OH 7,2',4'-MeO-flavone), flavones (luteolin, apigenin), flavanones (naringenin, hesperetin), flavanonols (taxifolin), isoflavones (genistein, daidzein), flavonol glycosides (quercitrin, isoquercitrin, rutin), and chalcones (isoliquiritigenin). Specific for the C-7 position, with a 20-fold lower activity for the C-3 position. This is UDP-glucosyl transferase 73B2 (UGT73B2) from Arabidopsis thaliana (Mouse-ear cress).